Consider the following 732-residue polypeptide: S-adenosyl-L-methionine-dependent tRNA 4-demethylwyosine synthase TYW1 (732 aa).

The 159-residue stretch at 79–237 (VKIFYGSQTG…DFRAWKTKFI (159 aa)) folds into the Flavodoxin-like domain. FMN contacts are provided by residues 85 to 89 (SQTGT) and 176 to 208 (VFGL…HRVM). The disordered stretch occupies residues 248-314 (RKKSCGGHCK…HQSLNSIVDV (67 aa)). A compositionally biased stretch (basic and acidic residues) spans 259–286 (GKCESHQHGSEEREEGSHEQDELHHRDT). Over residues 287 to 301 (EEEEPFESSSEEEFG) the composition is skewed to acidic residues. Residues 400–644 (YGIESHRCME…VDLIPEYEIA (245 aa)) form the Radical SAM core domain. Residues Cys-416, Cys-420, and Cys-423 each contribute to the [4Fe-4S] cluster site.

This sequence belongs to the TYW1 family. [4Fe-4S] cluster is required as a cofactor.

The catalysed reaction is N(1)-methylguanosine(37) in tRNA(Phe) + pyruvate + S-adenosyl-L-methionine = 4-demethylwyosine(37) in tRNA(Phe) + 5'-deoxyadenosine + L-methionine + CO2 + H2O. Its pathway is tRNA modification; wybutosine-tRNA(Phe) biosynthesis. Probable component of the wybutosine biosynthesis pathway. Wybutosine is a hyper modified guanosine with a tricyclic base found at the 3'-position adjacent to the anticodon of eukaryotic phenylalanine tRNA. Catalyzes the condensation of N-methylguanine with 2 carbon atoms from pyruvate to form the tricyclic 4-demethylwyosine, an intermediate in wybutosine biosynthesis. This Homo sapiens (Human) protein is S-adenosyl-L-methionine-dependent tRNA 4-demethylwyosine synthase TYW1 (TYW1).